Here is a 390-residue protein sequence, read N- to C-terminus: Protein phosphatase methylesterase 1 (390 aa).

The disordered stretch occupies residues 19–50 (FGLSSLSEDPDESESNSNYFSPTPQPPNELRT). Positions 100–332 (PIFICHHGAG…NLIIGQMQGK (233 aa)) constitute an AB hydrolase-1 domain. Residues Ser186, Asp213, and His346 contribute to the active site.

This sequence belongs to the AB hydrolase superfamily.

It catalyses the reaction [phosphatase 2A protein]-C-terminal L-leucine methyl ester + H2O = [phosphatase 2A protein]-C-terminal L-leucine + methanol + H(+). Its function is as follows. Demethylates proteins that have been reversibly carboxymethylated. Demethylates the phosphatase PP2A catalytic subunit. The polypeptide is Protein phosphatase methylesterase 1 (PPE1) (Debaryomyces hansenii (strain ATCC 36239 / CBS 767 / BCRC 21394 / JCM 1990 / NBRC 0083 / IGC 2968) (Yeast)).